The chain runs to 95 residues: MRSYETMYILSPDLSEEERKGLIERFKNLIIENGGEITNFDEWGKRKLAYLIDKKPEGYYVLMNFNSDSKVSQELERVYKITDGVLRYLIIRTDE.

This sequence belongs to the bacterial ribosomal protein bS6 family.

Functionally, binds together with bS18 to 16S ribosomal RNA. This is Small ribosomal subunit protein bS6 from Thermoanaerobacter pseudethanolicus (strain ATCC 33223 / 39E) (Clostridium thermohydrosulfuricum).